The primary structure comprises 152 residues: Deoxyuridine 5'-triphosphate nucleotidohydrolase (152 aa).

Substrate is bound by residues 72 to 74 (RSG), asparagine 85, and 89 to 91 (TID).

Belongs to the dUTPase family. The cofactor is Mg(2+).

It carries out the reaction dUTP + H2O = dUMP + diphosphate + H(+). It participates in pyrimidine metabolism; dUMP biosynthesis; dUMP from dCTP (dUTP route): step 2/2. In terms of biological role, this enzyme is involved in nucleotide metabolism: it produces dUMP, the immediate precursor of thymidine nucleotides and it decreases the intracellular concentration of dUTP so that uracil cannot be incorporated into DNA. This is Deoxyuridine 5'-triphosphate nucleotidohydrolase from Afipia carboxidovorans (strain ATCC 49405 / DSM 1227 / KCTC 32145 / OM5) (Oligotropha carboxidovorans).